The primary structure comprises 325 residues: Probable cell division protein WhiA (325 aa).

Residues 273–306 (SLEELGALADPPLTKDAVAGRIRRLLALADKRAN) constitute a DNA-binding region (H-T-H motif).

Belongs to the WhiA family.

Functionally, involved in cell division and chromosome segregation. The polypeptide is Probable cell division protein WhiA (Frankia alni (strain DSM 45986 / CECT 9034 / ACN14a)).